A 219-amino-acid polypeptide reads, in one-letter code: Large ribosomal subunit protein uL3 (219 aa).

The protein belongs to the universal ribosomal protein uL3 family. As to quaternary structure, part of the 50S ribosomal subunit. Forms a cluster with proteins L14 and L19.

In terms of biological role, one of the primary rRNA binding proteins, it binds directly near the 3'-end of the 23S rRNA, where it nucleates assembly of the 50S subunit. The sequence is that of Large ribosomal subunit protein uL3 from Salinispora tropica (strain ATCC BAA-916 / DSM 44818 / JCM 13857 / NBRC 105044 / CNB-440).